A 291-amino-acid chain; its full sequence is Ribosomal large subunit pseudouridine synthase B (291 aa).

The S4 RNA-binding domain occupies 3 to 63 (EKLQKVLARA…GHLISVKESA (61 aa)). The Nucleophile role is filled by Asp-110. Residues 272–291 (VKRHSQIAGGRRSGGRNNNG) form a disordered region.

This sequence belongs to the pseudouridine synthase RsuA family.

The enzyme catalyses uridine(2605) in 23S rRNA = pseudouridine(2605) in 23S rRNA. In terms of biological role, responsible for synthesis of pseudouridine from uracil-2605 in 23S ribosomal RNA. In Salmonella typhi, this protein is Ribosomal large subunit pseudouridine synthase B (rluB).